Reading from the N-terminus, the 364-residue chain is Phosphoserine aminotransferase (364 aa).

Arg42 is an L-glutamate binding site. Residues 76-77 (GR), Trp102, Thr156, Asp175, and Gln198 contribute to the pyridoxal 5'-phosphate site. Lys199 is subject to N6-(pyridoxal phosphate)lysine. Residue 240–241 (NT) coordinates pyridoxal 5'-phosphate.

Belongs to the class-V pyridoxal-phosphate-dependent aminotransferase family. SerC subfamily. As to quaternary structure, homodimer. Pyridoxal 5'-phosphate serves as cofactor.

The protein localises to the cytoplasm. It catalyses the reaction O-phospho-L-serine + 2-oxoglutarate = 3-phosphooxypyruvate + L-glutamate. The enzyme catalyses 4-(phosphooxy)-L-threonine + 2-oxoglutarate = (R)-3-hydroxy-2-oxo-4-phosphooxybutanoate + L-glutamate. It functions in the pathway amino-acid biosynthesis; L-serine biosynthesis; L-serine from 3-phospho-D-glycerate: step 2/3. It participates in cofactor biosynthesis; pyridoxine 5'-phosphate biosynthesis; pyridoxine 5'-phosphate from D-erythrose 4-phosphate: step 3/5. Its function is as follows. Catalyzes the reversible conversion of 3-phosphohydroxypyruvate to phosphoserine and of 3-hydroxy-2-oxo-4-phosphonooxybutanoate to phosphohydroxythreonine. This is Phosphoserine aminotransferase from Shewanella sediminis (strain HAW-EB3).